Reading from the N-terminus, the 237-residue chain is MQENRPVIALDFPEFSDVKDFLEKFDPSEKLYIKLGMELFYTAGPQVVYYVKSLGHSVFLDLKLHDIPNTVESSMRVLARLGVDMVNVHAAGGVEMMVAAKRGLEAGTPIGRQRPKLIAVTQLTSTSEEIMQNDQKIMTSLEESVINYAQKTAQAGLDGVVCSAHEVEKIKAATSKEFICLTPGIRPEGASKGDQKRVMTPKEARTIGSDYIVVGRPITQAKDPVSAYHAIKEEWNQ.

Substrate contacts are provided by residues Asp-11, Lys-34, 61-70, Thr-124, Arg-186, Gln-195, Gly-215, and Arg-216; that span reads DLKLHDIPNT. The active-site Proton donor is the Lys-63.

This sequence belongs to the OMP decarboxylase family. Type 1 subfamily. In terms of assembly, homodimer.

The enzyme catalyses orotidine 5'-phosphate + H(+) = UMP + CO2. The protein operates within pyrimidine metabolism; UMP biosynthesis via de novo pathway; UMP from orotate: step 2/2. Its function is as follows. Catalyzes the decarboxylation of orotidine 5'-monophosphate (OMP) to uridine 5'-monophosphate (UMP). In Lactococcus lactis subsp. cremoris (strain MG1363), this protein is Orotidine 5'-phosphate decarboxylase.